Consider the following 124-residue polypeptide: Small ribosomal subunit protein eS6 (124 aa).

It belongs to the eukaryotic ribosomal protein eS6 family.

In Methanococcus maripaludis (strain C7 / ATCC BAA-1331), this protein is Small ribosomal subunit protein eS6.